A 310-amino-acid polypeptide reads, in one-letter code: Quinolinate synthase (310 aa).

Iminosuccinate is bound by residues His-27 and Ser-44. Cys-89 provides a ligand contact to [4Fe-4S] cluster. Iminosuccinate is bound by residues 115–117 and Ser-132; that span reads YVN. Cys-175 lines the [4Fe-4S] cluster pocket. Residues 201-203 and Thr-222 contribute to the iminosuccinate site; that span reads HPE. Cys-267 is a [4Fe-4S] cluster binding site.

It belongs to the quinolinate synthase family. Type 2 subfamily. [4Fe-4S] cluster serves as cofactor.

It localises to the cytoplasm. It catalyses the reaction iminosuccinate + dihydroxyacetone phosphate = quinolinate + phosphate + 2 H2O + H(+). Its pathway is cofactor biosynthesis; NAD(+) biosynthesis; quinolinate from iminoaspartate: step 1/1. Its function is as follows. Catalyzes the condensation of iminoaspartate with dihydroxyacetone phosphate to form quinolinate. In Thermus thermophilus (strain ATCC 27634 / DSM 579 / HB8), this protein is Quinolinate synthase.